The primary structure comprises 151 residues: UPF0178 protein Suden_0449 (151 aa).

Belongs to the UPF0178 family.

This is UPF0178 protein Suden_0449 from Sulfurimonas denitrificans (strain ATCC 33889 / DSM 1251) (Thiomicrospira denitrificans (strain ATCC 33889 / DSM 1251)).